Reading from the N-terminus, the 121-residue chain is Large ribosomal subunit protein bL12 (121 aa).

Belongs to the bacterial ribosomal protein bL12 family. In terms of assembly, homodimer. Part of the ribosomal stalk of the 50S ribosomal subunit. Forms a multimeric L10(L12)X complex, where L10 forms an elongated spine to which 2 to 4 L12 dimers bind in a sequential fashion. Binds GTP-bound translation factors.

In terms of biological role, forms part of the ribosomal stalk which helps the ribosome interact with GTP-bound translation factors. Is thus essential for accurate translation. This chain is Large ribosomal subunit protein bL12, found in Vibrio atlanticus (strain LGP32) (Vibrio splendidus (strain Mel32)).